The sequence spans 235 residues: Acyl-protein thioesterase 1 (235 aa).

Active-site charge relay system residues include S125, D181, and H213.

Belongs to the AB hydrolase superfamily. AB hydrolase 2 family.

Its subcellular location is the cytoplasm. The protein resides in the nucleus. It carries out the reaction S-hexadecanoyl-L-cysteinyl-[protein] + H2O = L-cysteinyl-[protein] + hexadecanoate + H(+). Hydrolyzes fatty acids from S-acylated cysteine residues in proteins with a strong preference for palmitoylated G-alpha proteins over other acyl substrates. Mediates the deacylation of G-alpha proteins such as GPA1 in vivo, but has weak or no activity toward palmitoylated Ras proteins. Has weak lysophospholipase activity in vitro; however such activity may not exist in vivo. The polypeptide is Acyl-protein thioesterase 1 (Gibberella zeae (strain ATCC MYA-4620 / CBS 123657 / FGSC 9075 / NRRL 31084 / PH-1) (Wheat head blight fungus)).